Reading from the N-terminus, the 1151-residue chain is SCF E3 ubiquitin ligase complex F-box protein GRR1 (1151 aa).

Over residues 1–18 (MDQDNNNHNDSNRLHPPD) the composition is skewed to basic and acidic residues. Residues 1 to 72 (MDQDNNNHND…ATSERNASEV (72 aa)) are disordered. Residues 38-49 (NNNNNNNNNNNN) show a composition bias toward low complexity. Over residues 58–72 (RTRETATSERNASEV) the composition is skewed to basic and acidic residues. Residues serine 199 and serine 300 each carry the phosphoserine modification. The F-box domain occupies 314–361 (VFALNMLPSEILHLILDKLNQKYDIVKFLTVSKLWAEIIVKILYYRPH). 13 LRR repeats span residues 399–423 (GDYM…TLVF), 424–449 (CKHI…DITG), 450–475 (IRDV…YVPQ), 476–501 (ARNV…KITA), 502–527 (NNNM…DITL), 528–553 (SPNV…RITH), 554–582 (NTNI…DLSG), 583–608 (CENI…FLGK), 609–634 (CSRI…HFGH), 635–660 (CFNI…DFAC), 661–685 (CTNL…GLVK), 686–714 (CTQM…HLSY), and 715–740 (CSNL…SLTA). Positions 1066–1080 (AGANDTSNNETNNGN) are enriched in low complexity. 2 disordered regions span residues 1066–1090 (AGAN…NPNF) and 1118–1151 (VRNN…EDML).

As to quaternary structure, interacts with SKP1. Component of the probable SCF(GRR1) complex containing CDC53, SKP1, RBX1 and GRR1.

Its subcellular location is the membrane. It functions in the pathway protein modification; protein ubiquitination. Substrate recognition component of a SCF (SKP1-CUL1-F-box protein) E3 ubiquitin-protein ligase complex which mediates the ubiquitination and subsequent proteasomal degradation of target proteins. Recognizes and directs ubiquitination of phosphorylated CLN1, CLN2 and GIC2. Probably constitutes the primary response element required for the generation or interpretation of the signal that induces glucose repression. This Saccharomyces cerevisiae (strain ATCC 204508 / S288c) (Baker's yeast) protein is SCF E3 ubiquitin ligase complex F-box protein GRR1 (GRR1).